The chain runs to 123 residues: MPPKTSGKAAKKAGKAQKNITKNDKKKKRKRKESYAIYIYKVLKQVHPDTGISSKAMSIMNSFVNDIFERIAAEASRLAHYNKRSTITSREIQTAVRLLLPGELAKHAVSEGTKAVTKYTSSK.

The interval 1 to 31 (MPPKTSGKAAKKAGKAQKNITKNDKKKKRKR) is disordered. The residue at position 2 (proline 2) is an N-methylproline; partial. Lysine 44 bears the N6-succinyllysine mark. An O-linked (GlcNAc) serine glycan is attached at serine 110. Lysine 114 and lysine 118 each carry N6-succinyllysine. Lysine 118 is covalently cross-linked (Glycyl lysine isopeptide (Lys-Gly) (interchain with G-Cter in ubiquitin)).

This sequence belongs to the histone H2B family. The nucleosome is a histone octamer containing two molecules each of H2A, H2B, H3 and H4 assembled in one H3-H4 heterotetramer and two H2A-H2B heterodimers. The octamer wraps approximately 147 bp of DNA. Post-translationally, phosphorylated by the catalytic component of the Dbf4-dependent kinase (DDK) complex Cdc7. Monoubiquitination of Lys-118 by Bre1 gives a specific tag for epigenetic transcriptional activation and is also prerequisite for histone H3 'Lys-4' and 'Lys-79' methylation. Deubiquitination of Lys-118 by the SAGA complex is involved in activating transcription of a large subset of genes. In terms of processing, methylation at Pro-2 increases upon heat shock. Post-translationally, glcNAcylation at Ser-110 promotes monoubiquitination of Lys-118. It fluctuates in response to extracellular glucose, and associates with transcribed genes.

The protein resides in the nucleus. It localises to the chromosome. Its function is as follows. Core component of nucleosome. Nucleosomes wrap and compact DNA into chromatin, limiting DNA accessibility to the cellular machineries which require DNA as a template. Histones thereby play a central role in transcription regulation, DNA repair, DNA replication and chromosomal stability. DNA accessibility is regulated via a complex set of post-translational modifications of histones, also called histone code, and nucleosome remodeling. The chain is Histone H2B (His2B) from Drosophila sechellia (Fruit fly).